The sequence spans 159 residues: Mitotic-spindle organizing protein 2 (159 aa).

The tract at residues Leu87 to Pro159 is disordered. Positions Pro91 to Glu105 are enriched in polar residues. Arg111 carries the post-translational modification Omega-N-methylarginine. Phosphoserine is present on Ser153.

It belongs to the MOZART2 family. Associates with the gamma-tubulin ring complex (gTuRC) consisting of TUBGCP2, TUBGCP3, TUBGCP4, TUBGCP5 and TUBGCP6 and gamma-tubulin TUBG1 or TUBG2; within the complex, interacts with TUBGCP2; the interaction plays a role in gTuRC activation.

The protein localises to the cytoplasm. The protein resides in the cytoskeleton. It is found in the microtubule organizing center. Its subcellular location is the centrosome. It localises to the spindle. Required for the recruitment and the assembly of the gamma-tubulin ring complex (gTuRC) at the centrosome. The gTuRC regulates the minus-end nucleation of alpha-beta tubulin heterodimers that grow into microtubule protafilaments, a critical step in centrosome duplication and spindle formation. In Mus musculus (Mouse), this protein is Mitotic-spindle organizing protein 2 (Mzt2).